The following is a 356-amino-acid chain: Ubiquitin-conjugating enzyme E2 Z (356 aa).

The span at Met-1–Ala-16 shows a compositional bias: low complexity. The disordered stretch occupies residues Met-1–Gly-22. The 155-residue stretch at Gln-101–Val-255 folds into the UBC core domain. Cys-190 acts as the Glycyl thioester intermediate in catalysis. Positions Asn-334 to Val-356 are disordered. At Ser-339 the chain carries Phosphoserine.

Belongs to the ubiquitin-conjugating enzyme family.

It localises to the cytoplasm. It is found in the nucleus. It carries out the reaction S-ubiquitinyl-[E1 ubiquitin-activating enzyme]-L-cysteine + [E2 ubiquitin-conjugating enzyme]-L-cysteine = [E1 ubiquitin-activating enzyme]-L-cysteine + S-ubiquitinyl-[E2 ubiquitin-conjugating enzyme]-L-cysteine.. It participates in protein modification; protein ubiquitination. Catalyzes the covalent attachment of ubiquitin to other proteins. Specific substrate for UBA6, not charged with ubiquitin by UBE1. May be involved in apoptosis regulation. The sequence is that of Ubiquitin-conjugating enzyme E2 Z (Ube2z) from Rattus norvegicus (Rat).